The following is a 388-amino-acid chain: MKIHEYQGKEILRKFGVAVPRGKPAFSVDEAVKVAEELGGPVWVVKAQIHAGGRGKGGGVKVAKSIEQVREYANQILGMQLVTHQTGPEGQKVNRLMIEEGADIKQELYVSLVVDRISQKIVLMGSSEGGMDIEEVAEKHPELIHKVIVEPSTGLLDAQADDLAAKIGVPAASIPQARAILQGLYKAFWETDASLAEINPLNVSGDGKVTALDAKFNFDSNALFRHPEIVAYRDLDEEDPAEIEASKFDLAYISLDGNIGCLVNGAGLAMATMDTIKLFGGEPANFLDVGGGATTEKVTEAFKLMLKNPDLKAILVNIFGGIMRCDVIAEGVIAGSKAVNLNVPLVVRMKGTNEDLGKKMLADSGLPIISADSMEEAAQKVVAAAAGK.

The region spanning 9–244 (KEILRKFGVA…LDEEDPAEIE (236 aa)) is the ATP-grasp domain. ATP is bound by residues Lys46, 53-55 (GRG), Glu99, Ala102, and Glu107. Residues Asn199 and Asp213 each contribute to the Mg(2+) site. Substrate is bound by residues Asn264 and 321–323 (GIM).

This sequence belongs to the succinate/malate CoA ligase beta subunit family. In terms of assembly, heterotetramer of two alpha and two beta subunits. Requires Mg(2+) as cofactor.

It carries out the reaction succinate + ATP + CoA = succinyl-CoA + ADP + phosphate. The catalysed reaction is GTP + succinate + CoA = succinyl-CoA + GDP + phosphate. It participates in carbohydrate metabolism; tricarboxylic acid cycle; succinate from succinyl-CoA (ligase route): step 1/1. Functionally, succinyl-CoA synthetase functions in the citric acid cycle (TCA), coupling the hydrolysis of succinyl-CoA to the synthesis of either ATP or GTP and thus represents the only step of substrate-level phosphorylation in the TCA. The beta subunit provides nucleotide specificity of the enzyme and binds the substrate succinate, while the binding sites for coenzyme A and phosphate are found in the alpha subunit. In Burkholderia cenocepacia (strain HI2424), this protein is Succinate--CoA ligase [ADP-forming] subunit beta.